Here is a 505-residue protein sequence, read N- to C-terminus: GMP synthase [glutamine-hydrolyzing] (505 aa).

The Glutamine amidotransferase type-1 domain maps to 2-190 (SVVILDFGSQ…FLEICGVARD (189 aa)). The active-site Nucleophile is cysteine 79. Active-site residues include histidine 165 and glutamate 167. Residues 191–380 (WNAEHIVDEL…LGLPDAIRMR (190 aa)) enclose the GMPS ATP-PPase domain. Residue 218–224 (SGGVDSS) coordinates ATP.

In terms of assembly, homodimer.

It carries out the reaction XMP + L-glutamine + ATP + H2O = GMP + L-glutamate + AMP + diphosphate + 2 H(+). It participates in purine metabolism; GMP biosynthesis; GMP from XMP (L-Gln route): step 1/1. In terms of biological role, catalyzes the synthesis of GMP from XMP. The polypeptide is GMP synthase [glutamine-hydrolyzing] (Deinococcus geothermalis (strain DSM 11300 / CIP 105573 / AG-3a)).